We begin with the raw amino-acid sequence, 271 residues long: 2-amino-3,7-dideoxy-D-threo-hept-6-ulosonate synthase (271 aa).

Residue Asp33 is the Proton acceptor of the active site. 1-deoxy-D-threo-hexo-2,5-diulose 6-phosphate-binding positions include 33–37 (DHGVS) and 153–155 (YPR). Tyr153 acts as the Proton donor in catalysis. Lys184 functions as the Schiff-base intermediate with substrate in the catalytic mechanism. 1-deoxy-D-threo-hexo-2,5-diulose 6-phosphate is bound by residues 209 to 210 (GG) and 236 to 237 (GR).

It belongs to the DeoC/FbaB aldolase family. ADHS subfamily. Homodecamer.

The catalysed reaction is 1-deoxy-D-threo-hexo-2,5-diulose 6-phosphate + L-aspartate 4-semialdehyde = 2,3-dioxopropyl phosphate + 2-amino-2,3,7-trideoxy-D-lyxo-hept-6-ulosonate. In terms of biological role, catalyzes a transaldol reaction between 6-deoxy-5-ketofructose 1-phosphate (DKFP) and L-aspartate semialdehyde (ASA) with an elimination of hydroxypyruvaldehyde phosphate to yield 2-amino-3,7-dideoxy-D-threo-hept-6-ulosonate (ADH). Plays a key role in an alternative pathway of the biosynthesis of 3-dehydroquinate (DHQ), which is involved in the canonical pathway for the biosynthesis of aromatic amino acids. The polypeptide is 2-amino-3,7-dideoxy-D-threo-hept-6-ulosonate synthase (Methanococcus aeolicus (strain ATCC BAA-1280 / DSM 17508 / OCM 812 / Nankai-3)).